The chain runs to 432 residues: Adenylosuccinate synthetase (432 aa).

Residues 13-19 (GDEGKGK) and 41-43 (GHT) each bind GTP. Aspartate 14 serves as the catalytic Proton acceptor. The Mg(2+) site is built by aspartate 14 and glycine 41. IMP is bound by residues 14–17 (DEGK), 39–42 (NAGH), threonine 130, arginine 144, glutamine 225, threonine 240, and arginine 304. Catalysis depends on histidine 42, which acts as the Proton donor. Residue 300-306 (ATTGRRR) participates in substrate binding. GTP-binding positions include arginine 306, 332–334 (KLD), and 415–417 (STG).

This sequence belongs to the adenylosuccinate synthetase family. Homodimer. It depends on Mg(2+) as a cofactor.

Its subcellular location is the cytoplasm. The enzyme catalyses IMP + L-aspartate + GTP = N(6)-(1,2-dicarboxyethyl)-AMP + GDP + phosphate + 2 H(+). It functions in the pathway purine metabolism; AMP biosynthesis via de novo pathway; AMP from IMP: step 1/2. Its function is as follows. Plays an important role in the de novo pathway of purine nucleotide biosynthesis. Catalyzes the first committed step in the biosynthesis of AMP from IMP. The polypeptide is Adenylosuccinate synthetase (Shigella flexneri serotype 5b (strain 8401)).